A 489-amino-acid polypeptide reads, in one-letter code: Ribulose bisphosphate carboxylase large chain (489 aa).

2 residues coordinate substrate: asparagine 128 and threonine 178. The active-site Proton acceptor is lysine 180. Lysine 182 is a substrate binding site. Residues lysine 206, aspartate 208, and glutamate 209 each contribute to the Mg(2+) site. Residue lysine 206 is modified to N6-carboxylysine. Histidine 298 functions as the Proton acceptor in the catalytic mechanism. Substrate-binding residues include arginine 299, histidine 331, and serine 383.

The protein belongs to the RuBisCO large chain family. Type I subfamily. Heterohexadecamer of 8 large chains and 8 small chains. Mg(2+) is required as a cofactor.

The enzyme catalyses 2 (2R)-3-phosphoglycerate + 2 H(+) = D-ribulose 1,5-bisphosphate + CO2 + H2O. It catalyses the reaction D-ribulose 1,5-bisphosphate + O2 = 2-phosphoglycolate + (2R)-3-phosphoglycerate + 2 H(+). RuBisCO catalyzes two reactions: the carboxylation of D-ribulose 1,5-bisphosphate, the primary event in carbon dioxide fixation, as well as the oxidative fragmentation of the pentose substrate. Both reactions occur simultaneously and in competition at the same active site. The protein is Ribulose bisphosphate carboxylase large chain of Nitrosospira sp. (strain 40KI).